Here is a 251-residue protein sequence, read N- to C-terminus: Transcription factor bHLH144 (251 aa).

3 disordered regions span residues 1–20 (MQNN…NMHN), 130–161 (YEEN…YGNT), and 173–202 (NNNN…RKKM). Over residues 9–18 (FSDEVGDRNM) the composition is skewed to basic and acidic residues. Residues 130 to 147 (YEENDDNEGEEDGGDSEE) are compositionally biased toward acidic residues. The span at 148–161 (VSTARTSSRDYGNT) shows a compositional bias: polar residues. Residues 173–192 (NNNNNNNSRKQSLSGSASSS) show a composition bias toward low complexity. A bHLH domain is found at 186 to 235 (SGSASSSNNDGKGRKKMKKMMGVLRRIVPGGEQMNTACVLDEAVQYLKSL).

As to quaternary structure, homodimer. Interacts with LHW.

The protein resides in the nucleus. The polypeptide is Transcription factor bHLH144 (BHLH144) (Arabidopsis thaliana (Mouse-ear cress)).